Here is a 518-residue protein sequence, read N- to C-terminus: Integrator complex subunit 14 (518 aa).

In terms of domain architecture, VWFA spans 2–204 (PTVVVMDVSL…KNVQSMFGKL (203 aa)). 3 residues coordinate Mg(2+): Ser-10, Ser-12, and Thr-86. The residue at position 418 (Lys-418) is an N6-acetyllysine.

This sequence belongs to the Integrator subunit 14 family. As to quaternary structure, component of the Integrator complex, composed of core subunits INTS1, INTS2, INTS3, INTS4, INTS5, INTS6, INTS7, INTS8, INTS9/RC74, INTS10, INTS11/CPSF3L, INTS12, INTS13, INTS14 and INTS15. The core complex associates with protein phosphatase 2A subunits PPP2CA and PPP2R1A, to form the Integrator-PP2A (INTAC) complex. INTS14 is part of the tail subcomplex, composed of INTS10, INTS13, INTS14 and INTS15.

The protein localises to the nucleus. Its function is as follows. Component of the integrator complex, a multiprotein complex that terminates RNA polymerase II (Pol II) transcription in the promoter-proximal region of genes. The integrator complex provides a quality checkpoint during transcription elongation by driving premature transcription termination of transcripts that are unfavorably configured for transcriptional elongation: the complex terminates transcription by (1) catalyzing dephosphorylation of the C-terminal domain (CTD) of Pol II subunit POLR2A/RPB1 and SUPT5H/SPT5, (2) degrading the exiting nascent RNA transcript via endonuclease activity and (3) promoting the release of Pol II from bound DNA. The integrator complex is also involved in terminating the synthesis of non-coding Pol II transcripts, such as enhancer RNAs (eRNAs), small nuclear RNAs (snRNAs), telomerase RNAs and long non-coding RNAs (lncRNAs). Within the integrator complex, INTS14 is part of the integrator tail module that acts as a platform for the recruitment of transcription factors at promoters. This is Integrator complex subunit 14 from Bos taurus (Bovine).